We begin with the raw amino-acid sequence, 188 residues long: MSQEDLEIDLDAIQRRMDGAMHALRTEFGSLRTGRASASILEPIHVDAYGQQTPLNQLGTINVPEPRMVVINVWDKGMISKVERAIRDSGIGINPVVDGPIIRLPIPELNEERRKELTKVAAHYAEQARVAIRNVRRDGMDQIKKAKAAGMAEDDQKMWSDEVQALTDKAIAAVDKALEEKQKEIMQV.

It belongs to the RRF family.

The protein resides in the cytoplasm. Functionally, responsible for the release of ribosomes from messenger RNA at the termination of protein biosynthesis. May increase the efficiency of translation by recycling ribosomes from one round of translation to another. This is Ribosome-recycling factor from Cereibacter sphaeroides (strain ATCC 17025 / ATH 2.4.3) (Rhodobacter sphaeroides).